A 206-amino-acid chain; its full sequence is Ribosomal RNA large subunit methyltransferase E (206 aa).

S-adenosyl-L-methionine-binding residues include glycine 60, tryptophan 62, aspartate 80, aspartate 96, and aspartate 121. Residue lysine 161 is the Proton acceptor of the active site.

It belongs to the class I-like SAM-binding methyltransferase superfamily. RNA methyltransferase RlmE family.

The protein localises to the cytoplasm. It catalyses the reaction uridine(2552) in 23S rRNA + S-adenosyl-L-methionine = 2'-O-methyluridine(2552) in 23S rRNA + S-adenosyl-L-homocysteine + H(+). Specifically methylates the uridine in position 2552 of 23S rRNA at the 2'-O position of the ribose in the fully assembled 50S ribosomal subunit. This is Ribosomal RNA large subunit methyltransferase E from Nitrosomonas eutropha (strain DSM 101675 / C91 / Nm57).